Consider the following 247-residue polypeptide: Probable transcriptional regulatory protein YPO2055/y2255/YP_1898 (247 aa).

Belongs to the TACO1 family.

It localises to the cytoplasm. The polypeptide is Probable transcriptional regulatory protein YPO2055/y2255/YP_1898 (Yersinia pestis).